Consider the following 203-residue polypeptide: Endo-type membrane-bound lytic murein transglycosylase A (203 aa).

A signal peptide spans 1 to 15 (MKLRWFAFLMVLLAG). A lipid anchor (N-palmitoyl cysteine) is attached at Cys-16. Cys-16 is lipidated: S-diacylglycerol cysteine.

The protein belongs to the transglycosylase Slt family.

It is found in the cell outer membrane. It catalyses the reaction Endolytic cleavage of the (1-&gt;4)-beta-glycosidic linkage between N-acetylmuramic acid (MurNAc) and N-acetylglucosamine (GlcNAc) residues in peptidoglycan with concomitant formation of a 1,6-anhydrobond in the MurNAc residue.. Functionally, murein-degrading enzyme. May play a role in recycling of muropeptides during cell elongation and/or cell division. Preferentially cleaves at a distance of more than two disaccharide units from the ends of the glycan chain. The sequence is that of Endo-type membrane-bound lytic murein transglycosylase A from Enterobacter sp. (strain 638).